The chain runs to 200 residues: Recombination protein RecR (200 aa).

The segment at 57-72 adopts a C4-type zinc-finger fold; that stretch reads CSQCRTFTEQETCAIC. Residues 81-176 form the Toprim domain; the sequence is GLLCVVEMPA…KVSRIAHGIP (96 aa).

The protein belongs to the RecR family.

Its function is as follows. May play a role in DNA repair. It seems to be involved in an RecBC-independent recombinational process of DNA repair. It may act with RecF and RecO. The chain is Recombination protein RecR from Actinobacillus succinogenes (strain ATCC 55618 / DSM 22257 / CCUG 43843 / 130Z).